The sequence spans 780 residues: Zinc finger and SCAN domain-containing protein 10 (780 aa).

The disordered stretch occupies residues 1–38; sequence MLGESVPAAVEQEQLGEVKLEEEEAVSPEDPRRPESRL. Positions 29–38 are enriched in basic and acidic residues; sequence EDPRRPESRL. In terms of domain architecture, SCAN box spans 56 to 126; that stretch reads MGPRASLSRL…LLLEGIHREP (71 aa). Disordered stretches follow at residues 153–237 and 255–324; these read GCAS…SRDQ and KAWP…GSLL. Phosphoserine occurs at positions 162 and 208. Polar residues predominate over residues 202-224; that stretch reads SSKQPLSPGPQKTFQALQESSPQ. Threonine 268 bears the Phosphothreonine mark. Basic and acidic residues predominate over residues 268-280; sequence TPDKEEFKQEEPK. 14 C2H2-type zinc fingers span residues 347–370, 376–398, 404–426, 432–454, 476–498, 522–544, 550–572, 578–600, 606–628, 634–656, 662–684, 690–712, 724–746, and 752–774; these read FICA…LRSH, FLCL…MRTH, HACH…LLTH, FLCA…LLAH, VLCS…LRIH, FVCS…RRVH, FSCQ…QRVH, YACP…LLTH, HHCT…QRSH, CRCS…QRIH, HACD…RRSH, YSCQ…LATH, QECV…LLVH, and YSCT…LRTH. Glutamine 483 carries the post-translational modification N5-methylglutamine. Residues 492–520 form a disordered region; it reads KRHLRIHARDKDRRSSEGSGSRRRDSDRR. Positions 498 to 520 are enriched in basic and acidic residues; the sequence is HARDKDRRSSEGSGSRRRDSDRR.

Interacts with POU5F1/OCT4 and SOX2. In terms of processing, methylated at Gln-483 by N6AMT1.

It localises to the nucleus. In terms of biological role, embryonic stem (ES) cell-specific transcription factor required to maintain ES cell pluripotency. Can both activate and /or repress expression of target genes, depending on the context. Specifically binds the 5'-[GA]CGCNNGCG[CT]-3' DNA consensus sequence. Regulates expression of POU5F1/OCT4, ZSCAN4 and ALYREF/THOC4. This Homo sapiens (Human) protein is Zinc finger and SCAN domain-containing protein 10 (ZSCAN10).